A 97-amino-acid polypeptide reads, in one-letter code: Protein GLUTAMINE DUMPER 7 (97 aa).

Over Met-1–Lys-25 the chain is Extracellular. A helical membrane pass occupies residues Ile-26–Ala-46. Residues Cys-47–Ala-97 are Cytoplasmic-facing. Positions Val-78–Gly-82 match the VIMAG motif.

This sequence belongs to the GLUTAMINE DUMPER 1 (TC 9.B.60) family. In terms of tissue distribution, expressed in the vascular tissues, even in the minor veins of the leaves.

The protein resides in the membrane. Its function is as follows. Probable subunit of an amino acid transporter involved in the regulation of the amino acid metabolism. Stimulates amino acid export by activating nonselective amino acid facilitators. The chain is Protein GLUTAMINE DUMPER 7 (GDU7) from Arabidopsis thaliana (Mouse-ear cress).